The chain runs to 439 residues: Divalent metal cation transporter MntH (439 aa).

A run of 11 helical transmembrane segments spans residues 32–52 (GASM…AYMD), 67–87 (GYAL…FQSL), 121–141 (IAAM…LSLL), 144–164 (MPLL…LLLE), 173–193 (LAIG…LFIT), 214–234 (ALLI…LFLH), 261–281 (VVVA…MAAG), 301–321 (APLL…ASGI), 350–370 (AVTM…TQAL), 371–391 (VLSQ…LLWF), and 406–426 (FIAV…AVLI).

It belongs to the NRAMP family.

It localises to the cell inner membrane. Its function is as follows. H(+)-stimulated, divalent metal cation uptake system. The protein is Divalent metal cation transporter MntH of Verminephrobacter eiseniae (strain EF01-2).